A 338-amino-acid polypeptide reads, in one-letter code: Lipoate-protein ligase A (338 aa).

The 188-residue stretch at 29–216 folds into the BPL/LPL catalytic domain; the sequence is PATQRVLFLW…AFFAHYGERV (188 aa). ATP-binding positions include Arg-71, 76-79, and Lys-134; that span reads GAVF. A (R)-lipoate-binding site is contributed by Lys-134.

This sequence belongs to the LplA family. As to quaternary structure, monomer.

It is found in the cytoplasm. The catalysed reaction is L-lysyl-[lipoyl-carrier protein] + (R)-lipoate + ATP = N(6)-[(R)-lipoyl]-L-lysyl-[lipoyl-carrier protein] + AMP + diphosphate + H(+). Its pathway is protein modification; protein lipoylation via exogenous pathway; protein N(6)-(lipoyl)lysine from lipoate: step 1/2. It functions in the pathway protein modification; protein lipoylation via exogenous pathway; protein N(6)-(lipoyl)lysine from lipoate: step 2/2. Its function is as follows. Catalyzes both the ATP-dependent activation of exogenously supplied lipoate to lipoyl-AMP and the transfer of the activated lipoyl onto the lipoyl domains of lipoate-dependent enzymes. In Escherichia coli O8 (strain IAI1), this protein is Lipoate-protein ligase A.